The sequence spans 358 residues: Protein-arginine kinase (358 aa).

The Phosphagen kinase C-terminal domain occupies 24–255 (IVLSSRIRLA…KQLIRQERVA (232 aa)). ATP is bound by residues 27-31 (SSRIR), histidine 92, arginine 126, 177-181 (RASVM), and 208-213 (RGIYGE). Positions 338-343 (RDERRA) match the RDXXRA motif of the pArg binding pocket involved in allosteric regulation motif.

This sequence belongs to the ATP:guanido phosphotransferase family.

The enzyme catalyses L-arginyl-[protein] + ATP = N(omega)-phospho-L-arginyl-[protein] + ADP + H(+). With respect to regulation, appears to be allosterically activated by the binding of pArg-containing polypeptides to the pArg-binding pocket localized in the C-terminal domain of McsB. Catalyzes the specific phosphorylation of arginine residues in a large number of proteins. Is part of the bacterial stress response system. Protein arginine phosphorylation has a physiologically important role and is involved in the regulation of many critical cellular processes, such as protein homeostasis, motility, competence, and stringent and stress responses, by regulating gene expression and protein activity. The chain is Protein-arginine kinase from Shouchella clausii (strain KSM-K16) (Alkalihalobacillus clausii).